A 340-amino-acid polypeptide reads, in one-letter code: MKYTQYPNSSKLKRNSDRREHDEKLSDELHNQSTIYEDEELSRAEYDSDSDSSVEDSTDNENSGKEMDEKSYEKNEDHVEDHRKRKKSKIQLLDIAEFKKENLADLDYQIGNSESKVEKGVNIEPFNIDDEIKHGVFDKDGNYIKTENATENDQQDNEEWMNDVINTEEVNRLEKEQSVKTQNSRHYMVHEALNLLKFFLVDENETVLESLGRLNKLRKIAISKKNKSLKYVIHGIELLSDLINILEKKGFSEVYEYNRLKVQDAIEEEIFDDSSRIVNHKTKLWGFKWLNKLDEYHGLYTNYEMSYWQKSYFKNSVIVKFHSEPDRDENWIHVSCLSFM.

Residues 1–10 (MKYTQYPNSS) are compositionally biased toward polar residues. Positions 1–86 (MKYTQYPNSS…DHVEDHRKRK (86 aa)) are disordered. Residues 14-30 (RNSDRREHDEKLSDELH) show a composition bias toward basic and acidic residues. Residues 47–59 (DSDSDSSVEDSTD) show a composition bias toward acidic residues. Residues 62–82 (NSGKEMDEKSYEKNEDHVEDH) show a composition bias toward basic and acidic residues. Residues 282-340 (TKLWGFKWLNKLDEYHGLYTNYEMSYWQKSYFKNSVIVKFHSEPDRDENWIHVSCLSFM) form the GYF domain.

Belongs to the LIN1 family. As to quaternary structure, interacts with the cohesin subunit IRR1. Interacts with PRP8, HEX3, NFI1, WSS1, RFC1 and YJL149W.

The protein localises to the nucleus. The sequence is that of Protein LIN1 (LIN1) from Saccharomyces cerevisiae (strain ATCC 204508 / S288c) (Baker's yeast).